We begin with the raw amino-acid sequence, 612 residues long: MDQNPQSQLKLLVTHGKEQGYLTYSEVNDHLPEDIIDSEQIDDIIQMINDMGIPVVEEAPDADDLILNEINTDTDEDAVEAATQVLSSVESELGRTTDPVRMYMREMGTVELLTREGEIDIAKRIEEGINQVQCSVSEYPEAITYLLEQYDRVKTGQIRLSDIITGFVDPNAEEIFPPTAIHIGSELLDEQQNNEEDEENNQEDHEDDHSIDPELANEKFSELRIQYNNTNNTIKNKNRTHKDSLLEIYNLSEVFKQFRLVPKQFDHLVNNMRHMMERVRKQERIIIKLCVEICKMPKKNFIKIFPIKKINYLWFIREQNTNQPWSENLKKVKEDVFISVKKLIKIEEETGLTIEQVKDINKRMSIGEAKARRAKKEMVEANLRLVISIAKKYTNRGLQFLDLIQEGNIGLMKAVDKFEYRRGYKFSTYATWWIRQAITRSIADQARTIRIPVHMIETINKLNRISRQMLQEIGREPTPEELSEKMLIPEDKIRKVLKIAKEPISMETPIGDDDDSHLGDFIEDTTLELPLDSATSESLRSATHDVLSGLTAREAKVLRMRFGIDMNTDHTLEEVGKQFDVTRERIRQIEAKALRKLRHPSRSEVLRSFLDD.

A compositionally biased stretch (acidic residues) spans 191–206 (QQNNEEDEENNQEDHE). Residues 191–210 (QQNNEEDEENNQEDHEDDHS) form a disordered region. The sigma-70 factor domain-2 stretch occupies residues 378 to 448 (MVEANLRLVI…TRSIADQART (71 aa)). Positions 402–405 (DLIQ) match the Interaction with polymerase core subunit RpoC motif. The sigma-70 factor domain-3 stretch occupies residues 457-533 (ETINKLNRIS…DTTLELPLDS (77 aa)). Positions 546–599 (VLSGLTAREAKVLRMRFGIDMNTDHTLEEVGKQFDVTRERIRQIEAKALRKLRH) are sigma-70 factor domain-4. The H-T-H motif DNA-binding region spans 572–591 (LEEVGKQFDVTRERIRQIEA).

This sequence belongs to the sigma-70 factor family. RpoD/SigA subfamily. As to quaternary structure, interacts transiently with the RNA polymerase catalytic core.

Its subcellular location is the cytoplasm. Its function is as follows. Sigma factors are initiation factors that promote the attachment of RNA polymerase to specific initiation sites and are then released. This sigma factor is the primary sigma factor during exponential growth. This is RNA polymerase sigma factor RpoD from Buchnera aphidicola subsp. Acyrthosiphon pisum (strain APS) (Acyrthosiphon pisum symbiotic bacterium).